Reading from the N-terminus, the 112-residue chain is Cell cycle protein GpsB (112 aa).

A coiled-coil region spans residues 38-72 (IKDYEAFHKEFEQLKQQNARLKRELEEQKLAATQV).

The protein belongs to the GpsB family. In terms of assembly, forms polymers through the coiled coil domains. Interacts with PBP1, MreC and EzrA.

The protein localises to the cytoplasm. Functionally, divisome component that associates with the complex late in its assembly, after the Z-ring is formed, and is dependent on DivIC and PBP2B for its recruitment to the divisome. Together with EzrA, is a key component of the system that regulates PBP1 localization during cell cycle progression. Its main role could be the removal of PBP1 from the cell pole after pole maturation is completed. Also contributes to the recruitment of PBP1 to the division complex. Not essential for septum formation. This is Cell cycle protein GpsB from Bacillus anthracis (strain A0248).